Reading from the N-terminus, the 236-residue chain is Sensory rhodopsin II (236 aa).

7 consecutive transmembrane segments (helical) span residues 4-24 (ITTW…VLAY), 38-58 (LLLI…ALGF), 73-93 (YVDW…LAGA), 101-121 (LVVL…TPSP), 122-142 (VSYA…YLLY), 167-187 (FVVV…AGVG), and 196-216 (LVVV…ALLA). At Lys-206 the chain carries N6-(retinylidene)lysine.

It belongs to the archaeal/bacterial/fungal opsin family. In terms of processing, the covalent binding of retinal to the apoprotein, bacterioopsin, generates bacteriorhodopsin.

It localises to the membrane. Functionally, mediates the photorepellent response. The chain is Sensory rhodopsin II (sop2) from Haloarcula marismortui (strain ATCC 43049 / DSM 3752 / JCM 8966 / VKM B-1809) (Halobacterium marismortui).